Reading from the N-terminus, the 1154-residue chain is Coiled-coil domain-containing protein 136 (1154 aa).

The interval M1 to H48 is disordered. Residues Y14–E32 are compositionally biased toward acidic residues. Residue S52 is modified to Phosphoserine. Coiled-coil stretches lie at residues Q696–Q733 and K859–V974. Basic and acidic residues predominate over residues D1031 to C1058. The interval D1031–F1131 is disordered. Positions D1077 to E1109 are enriched in acidic residues. A helical transmembrane segment spans residues I1130–A1150.

Expressed in gastric tissues. Down-regulated in gastric cancer.

It localises to the cytoplasmic vesicle. Its subcellular location is the secretory vesicle. It is found in the acrosome membrane. In terms of biological role, may play a role in acrosome formation in spermatogenesis and in fertilization. The chain is Coiled-coil domain-containing protein 136 (CCDC136) from Homo sapiens (Human).